Reading from the N-terminus, the 511-residue chain is MATLVQTGKAKQLTLLGFFAITASMVMAVYEYPTFATSGFSLVFFLLLGGILWFIPVGLCAAEMATVDGWEEGGVFAWVSNTLGPRWGFAAISFGYLQIAIGFIPMLYFVLGALSYILKWPALNEDPITKTIAALIILWALALTQFGGTKYTARIAKVGFFAGILLPAFILIALAAIYLHSGAPVAIEMDSKTFFPDFSKVGTLVVFVAFILSYMGVEASATHVNEMSNPGRDYPLAMLLLMVAAICLSSVGGLSIAMVIPGNEINLSAGVMQTFTVLMSHVAPEIEWTVRVISALLLLGVLAEIASWIVGPSRGMYVTAQKNLLPAAFAKMNKNGVPVTLVISQLVITSIALIILTNTGGGNNMSFLIALALTVVIYLCAYFMLFIGYIVLVLKHPDLKRTFNIPGGKGVKLVVAIVGLLTSIMAFIVSFLPPDNIQGDSTDMYVELLVVSFLVVLALPFILYAVHDRKGKANTGVTLEPINSQNAPKGHFFLHPRARSPHYIVMNDKKH.

At 1–14 (MATLVQTGKAKQLT) the chain is on the cytoplasmic side. Residues 15-35 (LLGFFAITASMVMAVYEYPTF) traverse the membrane as a helical segment. The Periplasmic segment spans residues 36–41 (ATSGFS). A helical transmembrane segment spans residues 42–62 (LVFFLLLGGILWFIPVGLCAA). Over 63–93 (EMATVDGWEEGGVFAWVSNTLGPRWGFAAIS) the chain is Cytoplasmic. Residues 94–114 (FGYLQIAIGFIPMLYFVLGAL) traverse the membrane as a helical segment. Over 115-127 (SYILKWPALNEDP) the chain is Periplasmic. Residues 128–148 (ITKTIAALIILWALALTQFGG) traverse the membrane as a helical segment. Residues 149 to 157 (TKYTARIAK) lie on the Cytoplasmic side of the membrane. A helical transmembrane segment spans residues 158-178 (VGFFAGILLPAFILIALAAIY). Topologically, residues 179-200 (LHSGAPVAIEMDSKTFFPDFSK) are periplasmic. The chain crosses the membrane as a helical span at residues 201–221 (VGTLVVFVAFILSYMGVEASA). Residues 222–239 (THVNEMSNPGRDYPLAML) lie on the Cytoplasmic side of the membrane. The chain crosses the membrane as a helical span at residues 240-260 (LLMVAAICLSSVGGLSIAMVI). Residues 261 to 291 (PGNEINLSAGVMQTFTVLMSHVAPEIEWTVR) lie on the Periplasmic side of the membrane. The helical transmembrane segment at 292–312 (VISALLLLGVLAEIASWIVGP) threads the bilayer. Over 313-335 (SRGMYVTAQKNLLPAAFAKMNKN) the chain is Cytoplasmic. The chain crosses the membrane as a helical span at residues 336 to 356 (GVPVTLVISQLVITSIALIIL). Topologically, residues 357–366 (TNTGGGNNMS) are periplasmic. The helical transmembrane segment at 367–387 (FLIALALTVVIYLCAYFMLFI) threads the bilayer. The Cytoplasmic portion of the chain corresponds to 388-412 (GYIVLVLKHPDLKRTFNIPGGKGVK). The helical transmembrane segment at 413 to 433 (LVVAIVGLLTSIMAFIVSFLP) threads the bilayer. Topologically, residues 434 to 445 (PDNIQGDSTDMY) are periplasmic. Residues 446–466 (VELLVVSFLVVLALPFILYAV) traverse the membrane as a helical segment. The Cytoplasmic portion of the chain corresponds to 467–511 (HDRKGKANTGVTLEPINSQNAPKGHFFLHPRARSPHYIVMNDKKH).

It belongs to the amino acid-polyamine-organocation (APC) superfamily. Glutamate:GABA antiporter (GGA) (TC 2.A.3.7) family.

It localises to the cell inner membrane. The catalysed reaction is 4-aminobutanoate(in) + L-glutamate(out) = 4-aminobutanoate(out) + L-glutamate(in). With respect to regulation, shows pH-dependent activity. The glutamate analog L-trans-pyrrolidine-2,4-dicarboxylic acid (L-PDC) blocks the uptake of glutamate by selective inhibition. Involved in glutaminase-dependent acid resistance. Exchanges extracellular glutamate (Glu) for intracellular gamma-aminobutyric acid (GABA) under acidic conditions. The ability to survive the extremely acidic conditions of the stomach is essential for successful colonization of the host by commensal and pathogenic bacteria. The chain is Glutamate/gamma-aminobutyrate antiporter (gadC) from Escherichia coli O157:H7.